Consider the following 338-residue polypeptide: DNA-directed RNA polymerase subunit alpha (338 aa).

The interval 1–225 (MLISQRPTLT…ELFGLARELN (225 aa)) is alpha N-terminal domain (alpha-NTD). The segment at 242–338 (YIAAYGMPIE…YIDTDPEETE (97 aa)) is alpha C-terminal domain (alpha-CTD). The segment at 314–338 (FDPTQLDGYDAATGDYIDTDPEETE) is disordered.

The protein belongs to the RNA polymerase alpha chain family. Homodimer. The RNAP catalytic core consists of 2 alpha, 1 beta, 1 beta' and 1 omega subunit. When a sigma factor is associated with the core the holoenzyme is formed, which can initiate transcription.

It carries out the reaction RNA(n) + a ribonucleoside 5'-triphosphate = RNA(n+1) + diphosphate. DNA-dependent RNA polymerase catalyzes the transcription of DNA into RNA using the four ribonucleoside triphosphates as substrates. In Corynebacterium diphtheriae (strain ATCC 700971 / NCTC 13129 / Biotype gravis), this protein is DNA-directed RNA polymerase subunit alpha.